A 231-amino-acid polypeptide reads, in one-letter code: Allergen Ani s 10 (231 aa).

Residues 1-19 (MHLITALVLLLQLIHFITS) form the signal peptide. 7 repeat units span residues 28-56 (GGPGPVVGGSGIGNVWEKANEQAAEQQNI), 57-85 (GGPGPVISGSGIGDVWNKANEPAEQQENI), 86-114 (GGPGPVVSGSGIGNVWEKANEQAAHQQSI), 115-143 (EGPGPVVSGSGIGNVWEKANEQAAHQQSI), 144-172 (EGPGPVVSGSGIGDVWNKANEQAAEQQNI), 173-201 (GGPGPVISGSGIGNVWEKANEQAAEQQNI), and 204-231 (GGPGPVKSGSGIGNVWEETNEEAASMQA). Residues 28-201 (GGPGPVVGGS…NEQAAEQQNI (174 aa)) are 6 X 29 AA tandem repeats of [EG]-G-P-G-P-V-[IV]-[SG]-G-S-G-I-G-[ND]-V-W-[NE]-K-A-N-E-[QP]-A-[AE]-[QEH]-Q-[EQ]-[NS]-I. Disordered regions lie at residues 107–126 (QAAHQQSIEGPGPVVSGSGI) and 134–231 (NEQA…SMQA). Low complexity-rich tracts occupy residues 114–123 (IEGPGPVVSG), 143–152 (IEGPGPVVSG), and 177–187 (PVISGSGIGNV).

This chain is Allergen Ani s 10, found in Anisakis simplex (Herring worm).